Here is a 106-residue protein sequence, read N- to C-terminus: Nucleoid-associated protein RPA0616 (106 aa).

It belongs to the YbaB/EbfC family. As to quaternary structure, homodimer.

It localises to the cytoplasm. The protein localises to the nucleoid. Functionally, binds to DNA and alters its conformation. May be involved in regulation of gene expression, nucleoid organization and DNA protection. This Rhodopseudomonas palustris (strain ATCC BAA-98 / CGA009) protein is Nucleoid-associated protein RPA0616.